The primary structure comprises 174 residues: Disulfide bond formation protein B (174 aa).

At 1–14 (MLNFLNICSKTRKS) the chain is on the cytoplasmic side. A helical membrane pass occupies residues 15–31 (WVLLIFTVVILELIALY). Residues 32 to 49 (LQHIVLIKPCVLCVYQRC) are Periplasmic-facing. The cysteines at positions 41 and 44 are disulfide-linked. A helical membrane pass occupies residues 50–65 (ALCGIGIAGLIGTIAP). Topologically, residues 66–71 (FTPLRF) are cytoplasmic. Residues 72–89 (FSIPIWIYSAWKGLLLAK) traverse the membrane as a helical segment. Residues 90-144 (EYTDIQLHPSPFFMCDLFVQFPHWLPLNKWWPSMFDADGDCAEYKWYFLSLEISQ) lie on the Periplasmic side of the membrane. The cysteines at positions 104 and 130 are disulfide-linked. Residues 145–163 (WMLIIFANYLIIAILVSLS) form a helical membrane-spanning segment. Over 164 to 174 (QIIDLKKWNNK) the chain is Cytoplasmic.

Belongs to the DsbB family.

It is found in the cell inner membrane. Required for disulfide bond formation in some periplasmic proteins. Acts by oxidizing the DsbA protein. In Blochmanniella pennsylvanica (strain BPEN), this protein is Disulfide bond formation protein B.